Here is a 190-residue protein sequence, read N- to C-terminus: Xanthine phosphoribosyltransferase (190 aa).

The xanthine site is built by leucine 20 and asparagine 27. 5-phospho-alpha-D-ribose 1-diphosphate is bound at residue 127–131 (AYGNA). Position 155 (lysine 155) interacts with xanthine.

It belongs to the purine/pyrimidine phosphoribosyltransferase family. Xpt subfamily. Homodimer.

It is found in the cytoplasm. The enzyme catalyses XMP + diphosphate = xanthine + 5-phospho-alpha-D-ribose 1-diphosphate. Its pathway is purine metabolism; XMP biosynthesis via salvage pathway; XMP from xanthine: step 1/1. Functionally, converts the preformed base xanthine, a product of nucleic acid breakdown, to xanthosine 5'-monophosphate (XMP), so it can be reused for RNA or DNA synthesis. The chain is Xanthine phosphoribosyltransferase from Bacteroides thetaiotaomicron (strain ATCC 29148 / DSM 2079 / JCM 5827 / CCUG 10774 / NCTC 10582 / VPI-5482 / E50).